The chain runs to 87 residues: Small ribosomal subunit protein bS20 (87 aa).

The tract at residues 1-22 is disordered; it reads MANSAQARKRARQSVKQRAHNA. Positions 7 to 19 are enriched in basic residues; the sequence is ARKRARQSVKQRA.

The protein belongs to the bacterial ribosomal protein bS20 family.

Functionally, binds directly to 16S ribosomal RNA. The protein is Small ribosomal subunit protein bS20 of Neisseria gonorrhoeae (strain ATCC 700825 / FA 1090).